The following is a 429-amino-acid chain: MSFYRSWIGEEGELIKRYTSSIKDDVEIAEEVIKVMEAHVKHLAEVGIMPKEAADAILKTLKEATPEQLLSSEFEDIHEALEKWLIDRLGEETAGWVGLGRSRNDHVAAAIRLAALRKASALRKNVEKMRCILAKKALEYADCAMPSFTHFQPAQAITFGHYLLAVDELAAEFLHVLKAVEKLLKRSPLGAGPAGGTRTPIDRERLAKLAGFEDVVENALYASGSRFFALALASAVVSFLTELSRTVDDLIRWNSPLVGYVAAPDSHVSTSSIMPHKRNLVTLEVFRARAAEALGHLTALNAVVMKIGLGYSLDLQEATRHLWAVLNMATEGVEIFIDFLEKMSFNCVKAREDAERYHSTSSDTAETIALSGVPFRKAYFQLAKEIKEGTARLMSIEEALQRPTRGSANPEEVKKAASTRLVFCREKPL.

The protein belongs to the lyase 1 family. Argininosuccinate lyase subfamily.

The protein localises to the cytoplasm. The catalysed reaction is 2-(N(omega)-L-arginino)succinate = fumarate + L-arginine. It functions in the pathway amino-acid biosynthesis; L-arginine biosynthesis; L-arginine from L-ornithine and carbamoyl phosphate: step 3/3. The sequence is that of Argininosuccinate lyase from Pyrobaculum islandicum (strain DSM 4184 / JCM 9189 / GEO3).